Consider the following 145-residue polypeptide: D-aminoacyl-tRNA deacylase (145 aa).

Positions 137–138 match the Gly-cisPro motif, important for rejection of L-amino acids motif; the sequence is GP.

It belongs to the DTD family. In terms of assembly, homodimer.

It is found in the cytoplasm. The catalysed reaction is glycyl-tRNA(Ala) + H2O = tRNA(Ala) + glycine + H(+). It catalyses the reaction a D-aminoacyl-tRNA + H2O = a tRNA + a D-alpha-amino acid + H(+). Its function is as follows. An aminoacyl-tRNA editing enzyme that deacylates mischarged D-aminoacyl-tRNAs. Also deacylates mischarged glycyl-tRNA(Ala), protecting cells against glycine mischarging by AlaRS. Acts via tRNA-based rather than protein-based catalysis; rejects L-amino acids rather than detecting D-amino acids in the active site. By recycling D-aminoacyl-tRNA to D-amino acids and free tRNA molecules, this enzyme counteracts the toxicity associated with the formation of D-aminoacyl-tRNA entities in vivo and helps enforce protein L-homochirality. This Limosilactobacillus reuteri (strain DSM 20016) (Lactobacillus reuteri) protein is D-aminoacyl-tRNA deacylase.